The following is a 552-amino-acid chain: CTP synthase (552 aa).

Residues 1–270 are amidoligase domain; sequence MTKYVFVTGG…DRIICEELKL (270 aa). Residue serine 13 participates in CTP binding. Serine 13 contributes to the UTP binding site. Residues 14–19 and aspartate 71 contribute to the ATP site; that span reads SLGKGI. 2 residues coordinate Mg(2+): aspartate 71 and glutamate 144. Residues 151-153, 191-196, and lysine 227 each bind CTP; these read DIE and KTKPTQ. Residues 191 to 196 and lysine 227 each bind UTP; that span reads KTKPTQ. One can recognise a Glutamine amidotransferase type-1 domain in the interval 295–547; sequence TIGMVGKYVD…VEAALANKQA (253 aa). Glycine 356 lines the L-glutamine pocket. The active-site Nucleophile; for glutamine hydrolysis is the cysteine 383. L-glutamine-binding positions include 384-387, glutamate 407, and arginine 473; that span reads LGMQ. Catalysis depends on residues histidine 520 and glutamate 522.

This sequence belongs to the CTP synthase family. As to quaternary structure, homotetramer.

It catalyses the reaction UTP + L-glutamine + ATP + H2O = CTP + L-glutamate + ADP + phosphate + 2 H(+). The catalysed reaction is L-glutamine + H2O = L-glutamate + NH4(+). It carries out the reaction UTP + NH4(+) + ATP = CTP + ADP + phosphate + 2 H(+). It participates in pyrimidine metabolism; CTP biosynthesis via de novo pathway; CTP from UDP: step 2/2. Allosterically activated by GTP, when glutamine is the substrate; GTP has no effect on the reaction when ammonia is the substrate. The allosteric effector GTP functions by stabilizing the protein conformation that binds the tetrahedral intermediate(s) formed during glutamine hydrolysis. Inhibited by the product CTP, via allosteric rather than competitive inhibition. In terms of biological role, catalyzes the ATP-dependent amination of UTP to CTP with either L-glutamine or ammonia as the source of nitrogen. Regulates intracellular CTP levels through interactions with the four ribonucleotide triphosphates. In Burkholderia cenocepacia (strain ATCC BAA-245 / DSM 16553 / LMG 16656 / NCTC 13227 / J2315 / CF5610) (Burkholderia cepacia (strain J2315)), this protein is CTP synthase.